The sequence spans 328 residues: Malate dehydrogenase (328 aa).

Residue 11 to 17 (GAAGQIG) coordinates NAD(+). Residues Arg-92 and Arg-98 each contribute to the substrate site. Residues Asn-105, Gln-112, and 129–131 (TGN) contribute to the NAD(+) site. Positions 131 and 162 each coordinate substrate. His-187 serves as the catalytic Proton acceptor.

Belongs to the LDH/MDH superfamily. MDH type 2 family.

It carries out the reaction (S)-malate + NAD(+) = oxaloacetate + NADH + H(+). Its function is as follows. Catalyzes the reversible oxidation of malate to oxaloacetate. The polypeptide is Malate dehydrogenase (Paenarthrobacter aurescens (strain TC1)).